The following is a 128-amino-acid chain: Aspartate 1-decarboxylase (128 aa).

The active-site Schiff-base intermediate with substrate; via pyruvic acid is the Ser25. Ser25 carries the post-translational modification Pyruvic acid (Ser). Thr57 contacts substrate. Residue Tyr58 is the Proton donor of the active site. Position 73-75 (73-75 (GSA)) interacts with substrate.

This sequence belongs to the PanD family. In terms of assembly, heterooctamer of four alpha and four beta subunits. It depends on pyruvate as a cofactor. Post-translationally, is synthesized initially as an inactive proenzyme, which is activated by self-cleavage at a specific serine bond to produce a beta-subunit with a hydroxyl group at its C-terminus and an alpha-subunit with a pyruvoyl group at its N-terminus.

Its subcellular location is the cytoplasm. It catalyses the reaction L-aspartate + H(+) = beta-alanine + CO2. The protein operates within cofactor biosynthesis; (R)-pantothenate biosynthesis; beta-alanine from L-aspartate: step 1/1. In terms of biological role, catalyzes the pyruvoyl-dependent decarboxylation of aspartate to produce beta-alanine. This chain is Aspartate 1-decarboxylase, found in Burkholderia cenocepacia (strain HI2424).